The primary structure comprises 429 residues: Trehalose-phosphate phosphatase (429 aa).

The Nucleophile role is filled by Asp181. Mg(2+) is bound by residues Asp181, Asp183, and Asp368. 181-183 contributes to the substrate binding site; that stretch reads DFD.

It belongs to the trehalose phosphatase family. The cofactor is Mg(2+).

It carries out the reaction alpha,alpha-trehalose 6-phosphate + H2O = alpha,alpha-trehalose + phosphate. The protein operates within glycan biosynthesis; trehalose biosynthesis. Removes the phosphate from trehalose 6-phosphate to produce free trehalose. This chain is Trehalose-phosphate phosphatase (otsB), found in Mycobacterium leprae (strain TN).